We begin with the raw amino-acid sequence, 261 residues long: Uridine-cytidine kinase 2-B (261 aa).

29-37 (GGTASGKSS) provides a ligand contact to ATP. Positions 86, 114, 119, 168, 178, and 186 each coordinate substrate. Residue D215 participates in ATP binding. The segment at 238–261 (RQNGFQNGHGTPRQRRTSESSRPH) is disordered.

It belongs to the uridine kinase family. As to quaternary structure, homotetramer.

It catalyses the reaction uridine + ATP = UMP + ADP + H(+). It carries out the reaction cytidine + ATP = CMP + ADP + H(+). It participates in pyrimidine metabolism; CTP biosynthesis via salvage pathway; CTP from cytidine: step 1/3. Its pathway is pyrimidine metabolism; UMP biosynthesis via salvage pathway; UMP from uridine: step 1/1. Phosphorylates uridine and cytidine to uridine monophosphate and cytidine monophosphate. Does not phosphorylate deoxyribonucleosides or purine ribonucleosides. Can use ATP or GTP as a phosphate donor. This is Uridine-cytidine kinase 2-B (uck2b) from Danio rerio (Zebrafish).